The primary structure comprises 974 residues: RING finger protein nhl-1 (974 aa).

Positions 1–29 (MSSSPQNEAEAREKMRELMSRPPSSRPAD) are disordered. Basic and acidic residues predominate over residues 9–19 (AEAREKMRELM). Residues 43-84 (CPICLDRYKQPKLLPCQHTFCYPCLESCADTLHRNLKCPECR) form an RING-type zinc finger. 2 disordered regions span residues 360–395 (VKSD…IRYR) and 416–548 (SLLT…DFPV). The span at 416–431 (SLLTTSVTADSSSRTS) shows a compositional bias: polar residues. Positions 437 to 446 (RVTRSVEPTK) are enriched in basic and acidic residues. Positions 447–465 (SRPTSLIVPNTETPRTVSP) are enriched in polar residues. Positions 488–501 (APLPQLPIRKPPLP) are enriched in pro residues. Residues 511–528 (LNEKVETIRRAHQQRQDA) are compositionally biased toward basic and acidic residues. Positions 529-538 (SRAASRAVSS) are enriched in low complexity. NHL repeat units follow at residues 699 to 742 (RAVF…FDKD), 746 to 788 (VRQF…FGLE), 792 to 835 (LFSF…FDKN), 839 to 883 (IAKF…FDPH), 887 to 930 (LFSF…FDAQ), and 934 to 974 (VSSF…IQIF).

As to quaternary structure, interacts with ubc-13.

The protein is RING finger protein nhl-1 of Caenorhabditis elegans.